The following is a 487-amino-acid chain: Cobyric acid synthase (487 aa).

Positions 249 to 435 constitute a GATase cobBQ-type domain; that stretch reads GIDIAIVRLP…IHGIFDEGDF (187 aa). Residue Cys330 is the Nucleophile of the active site. Residue His427 is part of the active site.

This sequence belongs to the CobB/CobQ family. CobQ subfamily.

The protein operates within cofactor biosynthesis; adenosylcobalamin biosynthesis. Catalyzes amidations at positions B, D, E, and G on adenosylcobyrinic A,C-diamide. NH(2) groups are provided by glutamine, and one molecule of ATP is hydrogenolyzed for each amidation. In Clostridium perfringens (strain SM101 / Type A), this protein is Cobyric acid synthase.